We begin with the raw amino-acid sequence, 189 residues long: UPF0301 protein CF0373 (189 aa).

This sequence belongs to the UPF0301 (AlgH) family.

This Chlamydia felis (strain Fe/C-56) (Chlamydophila felis) protein is UPF0301 protein CF0373.